The following is a 434-amino-acid chain: Tryptophan synthase beta chain (434 aa).

Lys-92 carries the N6-(pyridoxal phosphate)lysine modification. Positions 411 to 434 (VKGGVATSPESFDASGAKGAGSQS) are disordered.

It belongs to the TrpB family. As to quaternary structure, tetramer of two alpha and two beta chains. Pyridoxal 5'-phosphate serves as cofactor.

The catalysed reaction is (1S,2R)-1-C-(indol-3-yl)glycerol 3-phosphate + L-serine = D-glyceraldehyde 3-phosphate + L-tryptophan + H2O. It functions in the pathway amino-acid biosynthesis; L-tryptophan biosynthesis; L-tryptophan from chorismate: step 5/5. Its function is as follows. The beta subunit is responsible for the synthesis of L-tryptophan from indole and L-serine. In Polaromonas naphthalenivorans (strain CJ2), this protein is Tryptophan synthase beta chain.